Consider the following 157-residue polypeptide: 2-C-methyl-D-erythritol 2,4-cyclodiphosphate synthase (157 aa).

2 residues coordinate a divalent metal cation: Asp8 and His10. Residues Asp8–His10 and His34–Ser35 each bind 4-CDP-2-C-methyl-D-erythritol 2-phosphate. His42 serves as a coordination point for a divalent metal cation. Residues Asp56–Gly58, Phe61–Asp65, Ala100–Leu106, Thr132–Glu135, Phe139, and Arg142 each bind 4-CDP-2-C-methyl-D-erythritol 2-phosphate.

Belongs to the IspF family. Homotrimer. A divalent metal cation serves as cofactor.

The enzyme catalyses 4-CDP-2-C-methyl-D-erythritol 2-phosphate = 2-C-methyl-D-erythritol 2,4-cyclic diphosphate + CMP. It functions in the pathway isoprenoid biosynthesis; isopentenyl diphosphate biosynthesis via DXP pathway; isopentenyl diphosphate from 1-deoxy-D-xylulose 5-phosphate: step 4/6. Its function is as follows. Involved in the biosynthesis of isopentenyl diphosphate (IPP) and dimethylallyl diphosphate (DMAPP), two major building blocks of isoprenoid compounds. Catalyzes the conversion of 4-diphosphocytidyl-2-C-methyl-D-erythritol 2-phosphate (CDP-ME2P) to 2-C-methyl-D-erythritol 2,4-cyclodiphosphate (ME-CPP) with a corresponding release of cytidine 5-monophosphate (CMP). This is 2-C-methyl-D-erythritol 2,4-cyclodiphosphate synthase from Photorhabdus laumondii subsp. laumondii (strain DSM 15139 / CIP 105565 / TT01) (Photorhabdus luminescens subsp. laumondii).